Reading from the N-terminus, the 189-residue chain is Large ribosomal subunit protein uL6 (189 aa).

This sequence belongs to the universal ribosomal protein uL6 family. Part of the 50S ribosomal subunit.

Functionally, this protein binds to the 23S rRNA, and is important in its secondary structure. It is located near the subunit interface in the base of the L7/L12 stalk, and near the tRNA binding site of the peptidyltransferase center. This Bacteroides thetaiotaomicron (strain ATCC 29148 / DSM 2079 / JCM 5827 / CCUG 10774 / NCTC 10582 / VPI-5482 / E50) protein is Large ribosomal subunit protein uL6.